Here is a 365-residue protein sequence, read N- to C-terminus: 3-isopropylmalate dehydrogenase (365 aa).

80–93 (GPKWADNTGDQRPE) provides a ligand contact to NAD(+). Residues arginine 100, arginine 110, arginine 138, and aspartate 223 each contribute to the substrate site. Mg(2+)-binding residues include aspartate 223, aspartate 247, and aspartate 251. 280–292 (GSAPDIAGQDVAN) is a binding site for NAD(+). The disordered stretch occupies residues 337–365 (NEEDASTSAFGREVATRAADSVPQNAPTP).

It belongs to the isocitrate and isopropylmalate dehydrogenases family. LeuB type 1 subfamily. As to quaternary structure, homodimer. Requires Mg(2+) as cofactor. The cofactor is Mn(2+).

It is found in the cytoplasm. It carries out the reaction (2R,3S)-3-isopropylmalate + NAD(+) = 4-methyl-2-oxopentanoate + CO2 + NADH. Its pathway is amino-acid biosynthesis; L-leucine biosynthesis; L-leucine from 3-methyl-2-oxobutanoate: step 3/4. Functionally, catalyzes the oxidation of 3-carboxy-2-hydroxy-4-methylpentanoate (3-isopropylmalate) to 3-carboxy-4-methyl-2-oxopentanoate. The product decarboxylates to 4-methyl-2 oxopentanoate. The sequence is that of 3-isopropylmalate dehydrogenase from Salinibacter ruber (strain DSM 13855 / M31).